The chain runs to 323 residues: MQHQRNPQLNGQGELIHLLSIEGLPRDIVTHILDTAANFVSVNDREVKKVPLLRGKSVFNLFFENSTRTRTTFEIAAKRLSADVFNLDITRSSASKGESLLDTIANLSAMAADLFVVRHSESGAPYLIARHVAPHVHVINAGDGRHAHPTQGLLDLYTIRHYKKDFSQLTVAIVGDMLHSRVARSDIHGLITLGCAEVRAVGPRTLVPADMAQMGVRVCHQLQEGIEGADVIIMLRLQNERMSGALLSSSQEYFKSFGLTPEKLQLAKPDAIVMHPGPINRGVEIDSAVVDGRQSVILPQVGFGIAVRMAVMSIVAGNEACGH.

Carbamoyl phosphate-binding residues include Arg68 and Thr69. Lys96 lines the L-aspartate pocket. The carbamoyl phosphate site is built by Arg118, His148, and Gln151. L-aspartate-binding residues include Arg181 and Arg236. Gly277 and Pro278 together coordinate carbamoyl phosphate.

This sequence belongs to the aspartate/ornithine carbamoyltransferase superfamily. ATCase family. As to quaternary structure, heterododecamer (2C3:3R2) of six catalytic PyrB chains organized as two trimers (C3), and six regulatory PyrI chains organized as three dimers (R2).

It catalyses the reaction carbamoyl phosphate + L-aspartate = N-carbamoyl-L-aspartate + phosphate + H(+). Its pathway is pyrimidine metabolism; UMP biosynthesis via de novo pathway; (S)-dihydroorotate from bicarbonate: step 2/3. In terms of biological role, catalyzes the condensation of carbamoyl phosphate and aspartate to form carbamoyl aspartate and inorganic phosphate, the committed step in the de novo pyrimidine nucleotide biosynthesis pathway. The chain is Aspartate carbamoyltransferase catalytic subunit from Verminephrobacter eiseniae (strain EF01-2).